The chain runs to 181 residues: MPTQRKIETVQELTEKLSRAQLVVVADYRGEGRGMSVADMTELRRKLREHGGEVVVAKNTLLKIAANHTGRGALDPLLAGPTAVTFAYDDVAKVAKALLDYLKSGNKSFTVRGALLGQALLPADALEQVTKLPSREQALAQVVGGIAAPVSGVVGVLNAAISNVLYVLQARIDQLQPQSSS.

This sequence belongs to the universal ribosomal protein uL10 family. In terms of assembly, part of the ribosomal stalk of the 50S ribosomal subunit. The N-terminus interacts with L11 and the large rRNA to form the base of the stalk. The C-terminus forms an elongated spine to which L12 dimers bind in a sequential fashion forming a multimeric L10(L12)X complex.

Functionally, forms part of the ribosomal stalk, playing a central role in the interaction of the ribosome with GTP-bound translation factors. This Chloroflexus aggregans (strain MD-66 / DSM 9485) protein is Large ribosomal subunit protein uL10.